A 217-amino-acid polypeptide reads, in one-letter code: Adenylate kinase (217 aa).

12–17 (GAGKGS) is an ATP binding site. The tract at residues 32 to 61 (STGDMFRTHIKGSTPLGLEAKKYTDQGLLV) is NMP. AMP contacts are provided by residues T33, R38, 59-61 (LLV), 87-90 (GYPR), and Q94. The tract at residues 128–165 (GRRTCPVCGAIYHVDNYPPKVAGICDNDGATLVQRKDD) is LID. R129 is an ATP binding site. Residues C132 and C135 each coordinate Zn(2+). 138–139 (IY) is an ATP binding site. Residues C152 and D155 each contribute to the Zn(2+) site. 2 residues coordinate AMP: R162 and R173. Q201 provides a ligand contact to ATP.

Belongs to the adenylate kinase family. Monomer.

It is found in the cytoplasm. It catalyses the reaction AMP + ATP = 2 ADP. The protein operates within purine metabolism; AMP biosynthesis via salvage pathway; AMP from ADP: step 1/1. Its function is as follows. Catalyzes the reversible transfer of the terminal phosphate group between ATP and AMP. Plays an important role in cellular energy homeostasis and in adenine nucleotide metabolism. This chain is Adenylate kinase, found in Acholeplasma laidlawii (strain PG-8A).